The chain runs to 180 residues: 3-hydroxyanthranilate 3,4-dioxygenase (180 aa).

Residue Arg-44 coordinates O2. The Fe cation site is built by His-48, Glu-54, and His-92. Glu-54 contributes to the substrate binding site. Positions 96 and 106 each coordinate substrate. A divalent metal cation is bound by residues Cys-121, Cys-124, Cys-158, and Cys-161.

Belongs to the 3-HAO family. Requires Fe(2+) as cofactor.

It is found in the cytoplasm. The enzyme catalyses 3-hydroxyanthranilate + O2 = (2Z,4Z)-2-amino-3-carboxymuconate 6-semialdehyde. It participates in cofactor biosynthesis; NAD(+) biosynthesis; quinolinate from L-kynurenine: step 3/3. Catalyzes the oxidative ring opening of 3-hydroxyanthranilate to 2-amino-3-carboxymuconate semialdehyde, which spontaneously cyclizes to quinolinate. The protein is 3-hydroxyanthranilate 3,4-dioxygenase (bna1) of Neurospora crassa (strain ATCC 24698 / 74-OR23-1A / CBS 708.71 / DSM 1257 / FGSC 987).